We begin with the raw amino-acid sequence, 133 residues long: Ribosome-binding factor A (133 aa).

It belongs to the RbfA family. In terms of assembly, monomer. Binds 30S ribosomal subunits, but not 50S ribosomal subunits or 70S ribosomes.

It localises to the cytoplasm. Its function is as follows. One of several proteins that assist in the late maturation steps of the functional core of the 30S ribosomal subunit. Associates with free 30S ribosomal subunits (but not with 30S subunits that are part of 70S ribosomes or polysomes). Required for efficient processing of 16S rRNA. May interact with the 5'-terminal helix region of 16S rRNA. This chain is Ribosome-binding factor A, found in Salmonella schwarzengrund (strain CVM19633).